We begin with the raw amino-acid sequence, 412 residues long: MAAWDLLFRRVHLATFAGDEPYGALRDGALAVRTGRIEWLGAERDLPREARAAQEIDGAGGWLLPGLIDCHTHLVHAGNRAREFELRMQGANYEEIARAGGGIRVTVIATRAADEAALVVASRPRLARLIAEGVTTVEIKSGYGLELSAERRMLRAARALGDTAPVRVTTTFLGAHALPPEYDGRADDYIAEVCDVMLPALYREGLVDAVDAFCERIAFSPAQTEAVFRAARALGLPVRLHAEQLSDSGGAALAARYGALCADHLEHLSEAGAAALAAAGSVAVLLPGAFYFLRETHLPPAARLRALGVPVAIATDCNPGTSPLSSLLLALNMACVLFRLSPAAALAGVTRNAARALGRGDDLGTLEAGKLADLGLWNVDTPAELCYHLGYNPLALRVFGGQISGAGDVAQG.

Residues His-71 and His-73 each coordinate Fe(3+). 2 residues coordinate Zn(2+): His-71 and His-73. Arg-80, Tyr-143, and His-176 together coordinate 4-imidazolone-5-propanoate. Position 143 (Tyr-143) interacts with N-formimidoyl-L-glutamate. Position 241 (His-241) interacts with Fe(3+). His-241 lines the Zn(2+) pocket. Position 244 (Gln-244) interacts with 4-imidazolone-5-propanoate. Asp-316 serves as a coordination point for Fe(3+). Asp-316 contributes to the Zn(2+) binding site. The N-formimidoyl-L-glutamate site is built by Asn-318 and Gly-320. Thr-321 provides a ligand contact to 4-imidazolone-5-propanoate.

This sequence belongs to the metallo-dependent hydrolases superfamily. HutI family. Zn(2+) is required as a cofactor. Requires Fe(3+) as cofactor.

Its subcellular location is the cytoplasm. The catalysed reaction is 4-imidazolone-5-propanoate + H2O = N-formimidoyl-L-glutamate. Its pathway is amino-acid degradation; L-histidine degradation into L-glutamate; N-formimidoyl-L-glutamate from L-histidine: step 3/3. Functionally, catalyzes the hydrolytic cleavage of the carbon-nitrogen bond in imidazolone-5-propanoate to yield N-formimidoyl-L-glutamate. It is the third step in the universal histidine degradation pathway. The protein is Imidazolonepropionase of Aromatoleum aromaticum (strain DSM 19018 / LMG 30748 / EbN1) (Azoarcus sp. (strain EbN1)).